Consider the following 640-residue polypeptide: Phosphomethylpyrimidine synthase (640 aa).

Residues N235, M264, Y293, H329, 349 to 351, 390 to 393, and E429 contribute to the substrate site; these read SRG and DGLR. Residue H433 participates in Zn(2+) binding. Y456 lines the substrate pocket. Residue H497 participates in Zn(2+) binding. Positions 577, 580, and 585 each coordinate [4Fe-4S] cluster.

It belongs to the ThiC family. In terms of assembly, homodimer. The cofactor is [4Fe-4S] cluster.

It carries out the reaction 5-amino-1-(5-phospho-beta-D-ribosyl)imidazole + S-adenosyl-L-methionine = 4-amino-2-methyl-5-(phosphooxymethyl)pyrimidine + CO + 5'-deoxyadenosine + formate + L-methionine + 3 H(+). The protein operates within cofactor biosynthesis; thiamine diphosphate biosynthesis. Catalyzes the synthesis of the hydroxymethylpyrimidine phosphate (HMP-P) moiety of thiamine from aminoimidazole ribotide (AIR) in a radical S-adenosyl-L-methionine (SAM)-dependent reaction. The chain is Phosphomethylpyrimidine synthase from Photobacterium profundum (strain SS9).